The chain runs to 547 residues: Probable bifunctional tRNA threonylcarbamoyladenosine biosynthesis protein (547 aa).

The tract at residues 1-329 (MKKTFILGIE…FRTDDVKVTW (329 aa)) is kae1. The Fe cation site is built by histidine 113, histidine 117, and tyrosine 134. Residues 134-138 (YVSGA), aspartate 166, glycine 179, glutamate 183, and asparagine 262 each bind L-threonylcarbamoyladenylate. Aspartate 290 is a Fe cation binding site. Positions 340–547 (EISPETFFRM…EEIKKRARYA (208 aa)) constitute a Protein kinase domain. ATP-binding positions include 355 to 363 (LDNGAEAVV) and lysine 377. The Proton acceptor; for kinase activity role is filled by aspartate 464.

In the N-terminal section; belongs to the KAE1 / TsaD family. The protein in the C-terminal section; belongs to the protein kinase superfamily. Tyr protein kinase family. BUD32 subfamily. In terms of assembly, component of the KEOPS complex that consists of Kae1, Bud32, Cgi121 and Pcc1; the whole complex dimerizes. The cofactor is Fe(2+).

It localises to the cytoplasm. The catalysed reaction is L-seryl-[protein] + ATP = O-phospho-L-seryl-[protein] + ADP + H(+). It catalyses the reaction L-threonyl-[protein] + ATP = O-phospho-L-threonyl-[protein] + ADP + H(+). The enzyme catalyses L-threonylcarbamoyladenylate + adenosine(37) in tRNA = N(6)-L-threonylcarbamoyladenosine(37) in tRNA + AMP + H(+). In terms of biological role, required for the formation of a threonylcarbamoyl group on adenosine at position 37 (t(6)A37) in tRNAs that read codons beginning with adenine. Is a component of the KEOPS complex that is probably involved in the transfer of the threonylcarbamoyl moiety of threonylcarbamoyl-AMP (TC-AMP) to the N6 group of A37. The Kae1 domain likely plays a direct catalytic role in this reaction. The Bud32 domain probably displays kinase activity that regulates Kae1 function. This Methanosarcina mazei (strain ATCC BAA-159 / DSM 3647 / Goe1 / Go1 / JCM 11833 / OCM 88) (Methanosarcina frisia) protein is Probable bifunctional tRNA threonylcarbamoyladenosine biosynthesis protein.